The chain runs to 413 residues: Gamma-glutamyl phosphate reductase (413 aa).

Belongs to the gamma-glutamyl phosphate reductase family.

The protein resides in the cytoplasm. It catalyses the reaction L-glutamate 5-semialdehyde + phosphate + NADP(+) = L-glutamyl 5-phosphate + NADPH + H(+). It functions in the pathway amino-acid biosynthesis; L-proline biosynthesis; L-glutamate 5-semialdehyde from L-glutamate: step 2/2. Functionally, catalyzes the NADPH-dependent reduction of L-glutamate 5-phosphate into L-glutamate 5-semialdehyde and phosphate. The product spontaneously undergoes cyclization to form 1-pyrroline-5-carboxylate. The chain is Gamma-glutamyl phosphate reductase from Caulobacter vibrioides (strain ATCC 19089 / CIP 103742 / CB 15) (Caulobacter crescentus).